The sequence spans 493 residues: Glutamyl-tRNA(Gln) amidotransferase subunit A (493 aa).

Active-site charge relay system residues include Lys-78 and Ser-158. Residue Ser-182 is the Acyl-ester intermediate of the active site.

It belongs to the amidase family. GatA subfamily. Heterotrimer of A, B and C subunits.

The enzyme catalyses L-glutamyl-tRNA(Gln) + L-glutamine + ATP + H2O = L-glutaminyl-tRNA(Gln) + L-glutamate + ADP + phosphate + H(+). Functionally, allows the formation of correctly charged Gln-tRNA(Gln) through the transamidation of misacylated Glu-tRNA(Gln) in organisms which lack glutaminyl-tRNA synthetase. The reaction takes place in the presence of glutamine and ATP through an activated gamma-phospho-Glu-tRNA(Gln). This Methylocella silvestris (strain DSM 15510 / CIP 108128 / LMG 27833 / NCIMB 13906 / BL2) protein is Glutamyl-tRNA(Gln) amidotransferase subunit A.